An 89-amino-acid chain; its full sequence is DNA-directed RNA polymerase subunit Rpo6 (89 aa).

It belongs to the archaeal Rpo6/eukaryotic RPB6 RNA polymerase subunit family. As to quaternary structure, part of the 13-subunit RNA polymerase complex.

The protein localises to the cytoplasm. The enzyme catalyses RNA(n) + a ribonucleoside 5'-triphosphate = RNA(n+1) + diphosphate. DNA-dependent RNA polymerase (RNAP) catalyzes the transcription of DNA into RNA using the four ribonucleoside triphosphates as substrates. Its function is as follows. Reconstitution experiments show this subunit is required for basic activity. The chain is DNA-directed RNA polymerase subunit Rpo6 from Sulfolobus acidocaldarius (strain ATCC 33909 / DSM 639 / JCM 8929 / NBRC 15157 / NCIMB 11770).